The chain runs to 173 residues: Alpha-crystallin A chain (173 aa).

Position 1 is an N-acetylmethionine (methionine 1). The required for complex formation with BFSP1 and BFSP2 stretch occupies residues 1-63 (MDVTIQHPWF…RTVLDSGISE (63 aa)). Position 6 is a deamidated glutamine; partial (glutamine 6). Position 45 is a phosphoserine (serine 45). Residue glutamine 50 is modified to Deamidated glutamine; partial. The sHSP domain maps to 52-162 (LFRTVLDSGI…SHSERAIPVS (111 aa)). Lysine 99 is subject to N6-acetyllysine. Histidine 100 serves as a coordination point for Zn(2+). At asparagine 101 the chain carries Deamidated asparagine; partial. Residues glutamate 102 and histidine 107 each contribute to the Zn(2+) site. A Phosphoserine modification is found at serine 122. Asparagine 123 bears the Deamidated asparagine; partial mark. Cysteine 131 and cysteine 142 are joined by a disulfide. Glutamine 147 bears the Deamidated glutamine; partial mark. A disordered region spans residues 147–173 (QSGMDASHSERAIPVSREEKPSSAPSS). The span at 153–167 (SHSERAIPVSREEKP) shows a compositional bias: basic and acidic residues. Histidine 154 is a binding site for Zn(2+). The O-linked (GlcNAc) serine glycan is linked to serine 162.

It belongs to the small heat shock protein (HSP20) family. As to quaternary structure, heteromer composed of three CRYAA and one CRYAB subunits. Inter-subunit bridging via zinc ions enhances stability, which is crucial as there is no protein turn over in the lens. Can also form homodimers and homotetramers (dimers of dimers) which serve as the building blocks of homooligomers. Within homooligomers, the zinc-binding motif is created from residues of 3 different molecules. His-100 and Glu-102 from one molecule are ligands of the zinc ion, and His-107 and His-154 residues from additional molecules complete the site with tetrahedral coordination geometry. Part of a complex required for lens intermediate filament formation composed of BFSP1, BFSP2 and CRYAA. Undergoes age-dependent proteolytical cleavage at the C-terminus.

It localises to the cytoplasm. Its subcellular location is the nucleus. Its function is as follows. Contributes to the transparency and refractive index of the lens. In its oxidized form (absence of intramolecular disulfide bond), acts as a chaperone, preventing aggregation of various proteins under a wide range of stress conditions. Required for the correct formation of lens intermediate filaments as part of a complex composed of BFSP1, BFSP2 and CRYAA. The chain is Alpha-crystallin A chain (CRYAA) from Procavia capensis (Rock hyrax).